Reading from the N-terminus, the 279-residue chain is Thymidylate synthase (279 aa).

Arg-133 to Arg-134 is a binding site for dUMP. Catalysis depends on Cys-154, which acts as the Nucleophile. DUMP is bound by residues Arg-178–Asp-181, Asn-189, and His-219–Tyr-221. Residue Asp-181 coordinates (6R)-5,10-methylene-5,6,7,8-tetrahydrofolate. Position 278 (Ala-278) interacts with (6R)-5,10-methylene-5,6,7,8-tetrahydrofolate.

The protein belongs to the thymidylate synthase family. Bacterial-type ThyA subfamily. As to quaternary structure, homodimer.

The protein localises to the cytoplasm. The enzyme catalyses dUMP + (6R)-5,10-methylene-5,6,7,8-tetrahydrofolate = 7,8-dihydrofolate + dTMP. Its pathway is pyrimidine metabolism; dTTP biosynthesis. Functionally, catalyzes the reductive methylation of 2'-deoxyuridine-5'-monophosphate (dUMP) to 2'-deoxythymidine-5'-monophosphate (dTMP) while utilizing 5,10-methylenetetrahydrofolate (mTHF) as the methyl donor and reductant in the reaction, yielding dihydrofolate (DHF) as a by-product. This enzymatic reaction provides an intracellular de novo source of dTMP, an essential precursor for DNA biosynthesis. The polypeptide is Thymidylate synthase (Streptococcus sanguinis (strain SK36)).